A 227-amino-acid polypeptide reads, in one-letter code: Adenosylcobinamide-GDP ribazoletransferase (227 aa).

The next 5 membrane-spanning stretches (helical) occupy residues 3–23 (CLKA…ELDF), 26–46 (IWAT…AVYF), 95–115 (GVGG…ARPE), 117–137 (WLDY…VAAY), and 165–185 (AVAA…SLFF).

The protein belongs to the CobS family. Mg(2+) serves as cofactor.

The protein localises to the cell membrane. The catalysed reaction is alpha-ribazole + adenosylcob(III)inamide-GDP = adenosylcob(III)alamin + GMP + H(+). It carries out the reaction alpha-ribazole 5'-phosphate + adenosylcob(III)inamide-GDP = adenosylcob(III)alamin 5'-phosphate + GMP + H(+). Its pathway is cofactor biosynthesis; adenosylcobalamin biosynthesis; adenosylcobalamin from cob(II)yrinate a,c-diamide: step 7/7. In terms of biological role, joins adenosylcobinamide-GDP and alpha-ribazole to generate adenosylcobalamin (Ado-cobalamin). Also synthesizes adenosylcobalamin 5'-phosphate from adenosylcobinamide-GDP and alpha-ribazole 5'-phosphate. The protein is Adenosylcobinamide-GDP ribazoletransferase of Pyrobaculum islandicum (strain DSM 4184 / JCM 9189 / GEO3).